Reading from the N-terminus, the 459-residue chain is Methylenetetrahydrofolate--tRNA-(uracil-5-)-methyltransferase TrmFO (459 aa).

Residue 26–31 coordinates FAD; sequence GGGLAG.

This sequence belongs to the MnmG family. TrmFO subfamily. The cofactor is FAD.

The protein localises to the cytoplasm. The enzyme catalyses uridine(54) in tRNA + (6R)-5,10-methylene-5,6,7,8-tetrahydrofolate + NADH + H(+) = 5-methyluridine(54) in tRNA + (6S)-5,6,7,8-tetrahydrofolate + NAD(+). The catalysed reaction is uridine(54) in tRNA + (6R)-5,10-methylene-5,6,7,8-tetrahydrofolate + NADPH + H(+) = 5-methyluridine(54) in tRNA + (6S)-5,6,7,8-tetrahydrofolate + NADP(+). In terms of biological role, catalyzes the folate-dependent formation of 5-methyl-uridine at position 54 (M-5-U54) in all tRNAs. This is Methylenetetrahydrofolate--tRNA-(uracil-5-)-methyltransferase TrmFO from Synechococcus sp. (strain JA-2-3B'a(2-13)) (Cyanobacteria bacterium Yellowstone B-Prime).